The sequence spans 592 residues: Aspartate--tRNA ligase (592 aa).

Position 177 (Glu-177) interacts with L-aspartate. The aspartate stretch occupies residues 201–204 (QIFK). An L-aspartate-binding site is contributed by Arg-223. ATP contacts are provided by residues 223–225 (RDE) and Gln-232. His-451 contributes to the L-aspartate binding site. Glu-485 provides a ligand contact to ATP. Arg-492 serves as a coordination point for L-aspartate. 537 to 540 (GLDR) lines the ATP pocket.

It belongs to the class-II aminoacyl-tRNA synthetase family. Type 1 subfamily. As to quaternary structure, homodimer.

The protein localises to the cytoplasm. It carries out the reaction tRNA(Asp) + L-aspartate + ATP = L-aspartyl-tRNA(Asp) + AMP + diphosphate. In terms of biological role, catalyzes the attachment of L-aspartate to tRNA(Asp) in a two-step reaction: L-aspartate is first activated by ATP to form Asp-AMP and then transferred to the acceptor end of tRNA(Asp). In Bacillus licheniformis (strain ATCC 14580 / DSM 13 / JCM 2505 / CCUG 7422 / NBRC 12200 / NCIMB 9375 / NCTC 10341 / NRRL NRS-1264 / Gibson 46), this protein is Aspartate--tRNA ligase.